The sequence spans 161 residues: MTMSRISHIELDDSNLPPPTPEIEQERKVAIYDLLEENSFALPARDDRAVPEGPYRVNLSIRDKRLVFDIQTEDEEKAAEFHLSLGPFRQVVKDYFQICESYFNAVKTLPPSQIETIDMARRGIHNEGSRVLQERLDGKAEIDTDTARRLFTLICVLHFGG.

The interval 1–21 (MTMSRISHIELDDSNLPPPTP) is disordered.

Belongs to the UPF0262 family.

The protein is UPF0262 protein SPOA0072 of Ruegeria pomeroyi (strain ATCC 700808 / DSM 15171 / DSS-3) (Silicibacter pomeroyi).